Reading from the N-terminus, the 483-residue chain is 23S rRNA (uracil(1939)-C(5))-methyltransferase RlmD (483 aa).

The span at 1 to 11 (MTGLGKRRPAR) shows a compositional bias: basic residues. The tract at residues 1-36 (MTGLGKRRPARSRSGVSGLRERRQPASVERSAGSEG) is disordered. The TRAM domain maps to 29-90 (ERSAGSEGRR…KRFDEAHVSE (62 aa)). 4 residues coordinate [4Fe-4S] cluster: Cys-103, Cys-109, Cys-112, and Cys-189. 6 residues coordinate S-adenosyl-L-methionine: Gln-298, Phe-332, Asn-337, Glu-353, Asp-379, and Asp-401. Residue Cys-427 is the Nucleophile of the active site.

The protein belongs to the class I-like SAM-binding methyltransferase superfamily. RNA M5U methyltransferase family. RlmD subfamily.

The enzyme catalyses uridine(1939) in 23S rRNA + S-adenosyl-L-methionine = 5-methyluridine(1939) in 23S rRNA + S-adenosyl-L-homocysteine + H(+). Functionally, catalyzes the formation of 5-methyl-uridine at position 1939 (m5U1939) in 23S rRNA. The protein is 23S rRNA (uracil(1939)-C(5))-methyltransferase RlmD of Halomonas elongata (strain ATCC 33173 / DSM 2581 / NBRC 15536 / NCIMB 2198 / 1H9).